The chain runs to 1095 residues: DNA-directed RNA polymerase subunit beta (1095 aa).

The segment at 1069 to 1095 is disordered; sequence DLMQDVNPRRSTPSRPTYESLGKEYEE.

It belongs to the RNA polymerase beta chain family. As to quaternary structure, in cyanobacteria the RNAP catalytic core is composed of 2 alpha, 1 beta, 1 beta', 1 gamma and 1 omega subunit. When a sigma factor is associated with the core the holoenzyme is formed, which can initiate transcription.

It catalyses the reaction RNA(n) + a ribonucleoside 5'-triphosphate = RNA(n+1) + diphosphate. Its function is as follows. DNA-dependent RNA polymerase catalyzes the transcription of DNA into RNA using the four ribonucleoside triphosphates as substrates. The sequence is that of DNA-directed RNA polymerase subunit beta from Prochlorococcus marinus (strain NATL2A).